We begin with the raw amino-acid sequence, 402 residues long: GPI mannosyltransferase 1 (402 aa).

Transmembrane regions (helical) follow at residues 5–25 (VILL…YGIF), 79–99 (WIHM…VMII), 108–128 (LTKQ…ITIS), 162–182 (LSIH…IYLL), 191–211 (IWRL…PTYF), 238–258 (FSIW…SQSI), 260–280 (LSKL…YLLW), 309–329 (QYFI…TITW), 333–353 (VVCI…AYLL), and 365–385 (LFFG…VFIT).

This sequence belongs to the PIGM family.

It is found in the endoplasmic reticulum membrane. It participates in glycolipid biosynthesis; glycosylphosphatidylinositol-anchor biosynthesis. In terms of biological role, mannosyltransferase involved in glycosylphosphatidylinositol-anchor biosynthesis. Transfers the first alpha-1,4-mannose to GlcN-acyl-PI during GPI precursor assembly. Required for cell wall integrity. The sequence is that of GPI mannosyltransferase 1 (GPI14) from Kluyveromyces lactis (strain ATCC 8585 / CBS 2359 / DSM 70799 / NBRC 1267 / NRRL Y-1140 / WM37) (Yeast).